The primary structure comprises 367 residues: Glutamate 5-kinase (367 aa).

Residue K10 coordinates ATP. The substrate site is built by S50, D137, and N149. ATP contacts are provided by residues 169 to 170 and 211 to 217; these read TD and TGGMATK. In terms of domain architecture, PUA spans 275-353; that stretch reads AGVIIVDNGA…QEISQILGYE (79 aa).

Belongs to the glutamate 5-kinase family.

It localises to the cytoplasm. The enzyme catalyses L-glutamate + ATP = L-glutamyl 5-phosphate + ADP. It participates in amino-acid biosynthesis; L-proline biosynthesis; L-glutamate 5-semialdehyde from L-glutamate: step 1/2. Catalyzes the transfer of a phosphate group to glutamate to form L-glutamate 5-phosphate. The polypeptide is Glutamate 5-kinase (Proteus mirabilis (strain HI4320)).